Here is a 256-residue protein sequence, read N- to C-terminus: Alcohol dehydrogenase (256 aa).

12–35 contributes to the NAD(+) binding site; that stretch reads FVAGLGGIGLDTSKELVKRDLKNL. S140 lines the substrate pocket. Y153 serves as the catalytic Proton acceptor.

Belongs to the short-chain dehydrogenases/reductases (SDR) family. As to quaternary structure, homodimer.

It catalyses the reaction a primary alcohol + NAD(+) = an aldehyde + NADH + H(+). The catalysed reaction is a secondary alcohol + NAD(+) = a ketone + NADH + H(+). This is Alcohol dehydrogenase (Adh) from Drosophila orena (Fruit fly).